A 447-amino-acid polypeptide reads, in one-letter code: Phosphoglucosamine mutase (447 aa).

Ser-102 (phosphoserine intermediate) is an active-site residue. Residues Ser-102, Asp-241, Asp-243, and Asp-245 each coordinate Mg(2+). Phosphoserine is present on Ser-102.

It belongs to the phosphohexose mutase family. It depends on Mg(2+) as a cofactor. Post-translationally, activated by phosphorylation.

The enzyme catalyses alpha-D-glucosamine 1-phosphate = D-glucosamine 6-phosphate. Its function is as follows. Catalyzes the conversion of glucosamine-6-phosphate to glucosamine-1-phosphate. This is Phosphoglucosamine mutase from Hamiltonella defensa subsp. Acyrthosiphon pisum (strain 5AT).